The chain runs to 513 residues: Na(+)/H(+) antiporter NhaB (513 aa).

The next 9 membrane-spanning stretches (helical) occupy residues isoleucine 21–valine 41, isoleucine 88–methionine 108, leucine 119–phenylalanine 139, leucine 243–phenylalanine 263, methionine 299–alanine 318, isoleucine 322–glycine 344, proline 350–leucine 370, leucine 389–glycine 409, and methionine 477–leucine 497.

The protein belongs to the NhaB Na(+)/H(+) (TC 2.A.34) antiporter family.

It localises to the cell inner membrane. The enzyme catalyses 2 Na(+)(in) + 3 H(+)(out) = 2 Na(+)(out) + 3 H(+)(in). Functionally, na(+)/H(+) antiporter that extrudes sodium in exchange for external protons. This chain is Na(+)/H(+) antiporter NhaB, found in Actinobacillus pleuropneumoniae serotype 5b (strain L20).